The primary structure comprises 223 residues: Probable transaldolase (223 aa).

Catalysis depends on Lys-92, which acts as the Schiff-base intermediate with substrate.

This sequence belongs to the transaldolase family. Type 3B subfamily.

Its subcellular location is the cytoplasm. It catalyses the reaction D-sedoheptulose 7-phosphate + D-glyceraldehyde 3-phosphate = D-erythrose 4-phosphate + beta-D-fructose 6-phosphate. It participates in carbohydrate degradation; pentose phosphate pathway; D-glyceraldehyde 3-phosphate and beta-D-fructose 6-phosphate from D-ribose 5-phosphate and D-xylulose 5-phosphate (non-oxidative stage): step 2/3. Its function is as follows. Transaldolase is important for the balance of metabolites in the pentose-phosphate pathway. The protein is Probable transaldolase of Thermus thermophilus (strain ATCC 27634 / DSM 579 / HB8).